A 249-amino-acid polypeptide reads, in one-letter code: 5'-nucleotidase SurE (249 aa).

Positions 8, 9, 39, and 91 each coordinate a divalent metal cation.

It belongs to the SurE nucleotidase family. A divalent metal cation is required as a cofactor.

The protein localises to the cytoplasm. The enzyme catalyses a ribonucleoside 5'-phosphate + H2O = a ribonucleoside + phosphate. Nucleotidase that shows phosphatase activity on nucleoside 5'-monophosphates. This is 5'-nucleotidase SurE from Pseudomonas putida (strain ATCC 700007 / DSM 6899 / JCM 31910 / BCRC 17059 / LMG 24140 / F1).